The primary structure comprises 658 residues: Protein kinase and PP2C-like domain-containing protein (658 aa).

The region spanning 30–314 (FTLLSPIAKG…DNVVLELESI (285 aa)) is the Protein kinase domain. ATP is bound by residues 36–44 (IAKGSESVV) and Lys57. Catalysis depends on Asp149, which acts as the Proton acceptor. Residues 392–648 (SCGSFATCGR…DNITVIVVFL (257 aa)) enclose the PPM-type phosphatase domain. Residues Asp428, Gly429, Asp599, and Asp639 each coordinate Mn(2+).

In the N-terminal section; belongs to the protein kinase superfamily. Ser/Thr protein kinase family. This sequence in the C-terminal section; belongs to the PP2C family. Requires Mg(2+) as cofactor. Mn(2+) serves as cofactor.

It catalyses the reaction L-seryl-[protein] + ATP = O-phospho-L-seryl-[protein] + ADP + H(+). It carries out the reaction L-threonyl-[protein] + ATP = O-phospho-L-threonyl-[protein] + ADP + H(+). The enzyme catalyses O-phospho-L-seryl-[protein] + H2O = L-seryl-[protein] + phosphate. The catalysed reaction is O-phospho-L-threonyl-[protein] + H2O = L-threonyl-[protein] + phosphate. The protein is Protein kinase and PP2C-like domain-containing protein of Arabidopsis thaliana (Mouse-ear cress).